We begin with the raw amino-acid sequence, 872 residues long: MSQLTPMMRQYLEIKAGYPDAILFFRLGDFYEMFLDDAVKASRILDITLTSRNKNSDGADVPLCGIPYHSATPYIAKLIEAGEKVAICEQVEDPKSVKGIVRREVVKVITPGLVVDSSNLSPKENNYLLSLYCDDATTWGLSYLDLSTGEFRVTELDGFDAAVAEVACVKPREIILPAVFRENGRMKELMPVTAGLATTFVDDWVYDLDYCKRLIGSHFGGASPSALGCDGLNTGLYAICAVLHYLQETQKGRAGHVNSIIPYTNREYLVLDESTRRNLELTATLAEGKRKGSLLGLMDRTTTAMGGRKMKQWINYPLVTIQSITERQDAIEEFVQDPSRRTALVFLLNGVYDLERLNGRISLASAGAKDLVAMKESLARIPGIKELLASSSSVLLRRLNEGLNPLPDLVGLIAGGIVENPPFVLRDGGIIADGYNAELDELRAISREGKGFIARLEAQEKGRTGINSLKIRYNKVFGYYIEVTKTNLTSIPADYIRKQTLANAERYITPELKEYEDKVLGAEDRIRELEFSLFQEIRETVTGHGEIVARTADCLATLDVLASLAELAHERNYCRPLVDDGTTLFISEGRHPVIEAMHQGERFVPNDTLLDNGENQLIIITGPNMAGKSTFMRQVALITLMAQMGSFVPATEAHISLVDRIFTRVGASDNLARGQSTFMVEMMESANILRHATPKSLVILDEIGRGTSTFDGVSIAWAVAEFLHDNDKHAAKTLFATHYHELTELAVTRKRIKNFNIAVKEWNEQIIFLRKIVSGGASHSYGIQVARLAGLPLEVIERAKEILQNLEKGEFAEEGIPRIARGKKSAGSAPASQLSLFDSGEDMLRKRLKGMDVTTLTPLEALNLLDELKRMV.

Residue 622–629 (GPNMAGKS) coordinates ATP.

Belongs to the DNA mismatch repair MutS family.

Functionally, this protein is involved in the repair of mismatches in DNA. It is possible that it carries out the mismatch recognition step. This protein has a weak ATPase activity. In Geotalea uraniireducens (strain Rf4) (Geobacter uraniireducens), this protein is DNA mismatch repair protein MutS.